A 291-amino-acid chain; its full sequence is MEMO1 family protein PYRAB05390 (291 aa).

Belongs to the MEMO1 family.

This Pyrococcus abyssi (strain GE5 / Orsay) protein is MEMO1 family protein PYRAB05390.